Here is a 241-residue protein sequence, read N- to C-terminus: MMDWLYRYPPLYPGILLKRYKRFFADVQLTSGEIVTAHCPNTGPMTGVSTPQSAVQLSKSDNLNRKLAYTLELIQVHDNEPTWVGINTFLPNRVVKLALAKYLFPELGEYSQIKGEVVYGLDKKSRVDFFLTGSDEERPIYLEVKNTTLSEGRLALFPDTETTRGQKHLRELMALLPLTRAVMLYFINRGDCTEFSPGDRTDPVYGKLLRDAIALGLEVLPCRFDISPEGIRYLGLAKLKI.

This sequence belongs to the SfsA family.

The polypeptide is Sugar fermentation stimulation protein homolog (Nostoc punctiforme (strain ATCC 29133 / PCC 73102)).